We begin with the raw amino-acid sequence, 421 residues long: Testin (421 aa).

Residues 92–199 (MILTNPVAAK…GDVKLPCEMD (108 aa)) form the PET domain. The disordered stretch occupies residues 133–164 (EKQPVAGSEGAQYRKKQLAKQLPAHDQDPSKC). Positions 155-164 (PAHDQDPSKC) are enriched in basic and acidic residues. LIM zinc-binding domains are found at residues 234–297 (YSCY…CDSE), 299–359 (PRCA…NHAV), and 362–421 (QGCH…KMMS).

The protein belongs to the prickle / espinas / testin family. In terms of assembly, interacts via LIM domain 1 with ZYX. Interacts (via LIM domain 3) with ENAH and VASP. Interacts with ALKBH4, talin, actin, alpha-actinin, GRIP1 and PXN. Interacts (via LIM domain 2) with ACTL7A (via N-terminus). Heterodimer with ACTL7A; the heterodimer interacts with ENAH to form a heterotrimer.

It is found in the cytoplasm. The protein resides in the cell junction. Its subcellular location is the focal adhesion. Scaffold protein that may play a role in cell adhesion, cell spreading and in the reorganization of the actin cytoskeleton. Plays a role in the regulation of cell proliferation. May act as a tumor suppressor. The sequence is that of Testin (TES) from Colobus guereza (Mantled guereza).